A 347-amino-acid polypeptide reads, in one-letter code: UPF0284 protein M164_0030 (347 aa).

It belongs to the UPF0284 family.

This is UPF0284 protein M164_0030 from Saccharolobus islandicus (strain M.16.4 / Kamchatka #3) (Sulfolobus islandicus).